A 693-amino-acid polypeptide reads, in one-letter code: Iron-sulfur clusters transporter atm1, mitochondrial (693 aa).

The transit peptide at Met1–Tyr28 directs the protein to the mitochondrion. Topologically, residues Leu29–Arg118 are mitochondrial matrix. The helical transmembrane segment at Val119–Phe140 threads the bilayer. In terms of domain architecture, ABC transmembrane type-1 spans Val119 to Gln409. Residues Lys141–Gly163 are Mitochondrial intermembrane-facing. Residues Ala164–Phe187 traverse the membrane as a helical segment. The Mitochondrial matrix segment spans residues Ala188–Ile236. Residues Leu237 to Tyr260 form a helical membrane-spanning segment. A topological domain (mitochondrial intermembrane) is located at residue Lys261. The chain crosses the membrane as a helical span at residues Tyr262–Val282. Topologically, residues Arg283–Ala348 are mitochondrial matrix. Glutathione-binding positions include Arg288–Arg292 and Asn351–Gln354. Residues Phe349 to Tyr367 traverse the membrane as a helical segment. Topologically, residues Met368–Asp382 are mitochondrial intermembrane. Residues Leu383 to Tyr404 traverse the membrane as a helical segment. Residue Gly401 coordinates glutathione. Over Arg405–Ala693 the chain is Mitochondrial matrix. In terms of domain architecture, ABC transporter spans Ile443 to Ser679. ATP-binding positions include Tyr452 and Gly476–Arg487.

It belongs to the ABC transporter superfamily. ABCB family. Heavy Metal importer (TC 3.A.1.210) subfamily. Homodimer.

Its subcellular location is the mitochondrion inner membrane. Performs an essential function in the generation of cytoplasmic iron-sulfur proteins by mediating the ATP-dependent export of Fe/S cluster precursors synthesized by nfs1 and other mitochondrial proteins. Hydrolyzes ATP. Binds glutathione and may function by transporting a glutathione-conjugated iron-sulfur compound. The polypeptide is Iron-sulfur clusters transporter atm1, mitochondrial (Schizosaccharomyces pombe (strain 972 / ATCC 24843) (Fission yeast)).